Consider the following 342-residue polypeptide: UDP-3-O-acylglucosamine N-acyltransferase (342 aa).

The Proton acceptor role is filled by H243.

Belongs to the transferase hexapeptide repeat family. LpxD subfamily. As to quaternary structure, homotrimer.

The catalysed reaction is a UDP-3-O-[(3R)-3-hydroxyacyl]-alpha-D-glucosamine + a (3R)-hydroxyacyl-[ACP] = a UDP-2-N,3-O-bis[(3R)-3-hydroxyacyl]-alpha-D-glucosamine + holo-[ACP] + H(+). It participates in bacterial outer membrane biogenesis; LPS lipid A biosynthesis. Catalyzes the N-acylation of UDP-3-O-acylglucosamine using 3-hydroxyacyl-ACP as the acyl donor. Is involved in the biosynthesis of lipid A, a phosphorylated glycolipid that anchors the lipopolysaccharide to the outer membrane of the cell. This is UDP-3-O-acylglucosamine N-acyltransferase from Coxiella burnetii (strain CbuK_Q154) (Coxiella burnetii (strain Q154)).